The primary structure comprises 1323 residues: Clustered mitochondria protein homolog (1323 aa).

Residues 103 to 141 form a TPR 1 repeat; sequence KEKPYNLAAIYDHLNKFREVIGLHFLDKYSSEVGVLSGV. The segment at 149–186 is disordered; that stretch reads LQDVKETEPETQDDKDKETDETKSTKEDSNQTEEKKSE. Positions 150-186 are enriched in basic and acidic residues; that stretch reads QDVKETEPETQDDKDKETDETKSTKEDSNQTEEKKSE. The 258-residue stretch at 351 to 608 folds into the Clu domain; it reads FANQPDASRS…RATPLDIEFI (258 aa). The stretch at 530-563 is one TPR 2 repeat; sequence CYGLSTDGSKIFSDSSFENVLKPIAEAFHLKPHP. Residues 764 to 801 show a composition bias toward basic and acidic residues; the sequence is NEEEISKRKEESEKKATEGKDQDKEEEKANDNEKNKED. Residues 764-808 form a disordered region; it reads NEEEISKRKEESEKKATEGKDQDKEEEKANDNEKNKEDDKEEVSN. TPR repeat units follow at residues 1042–1076, 1099–1132, 1141–1174, and 1183–1216; these read LSVY…KSEA, ITAY…WTLV, VNTY…STKL, and GMLR…FTKF. A disordered region spans residues 1250–1323; sequence KALAQQASAS…KKSNNKKSKK (74 aa). The span at 1308-1323 shows a compositional bias: basic residues; it reads PKKQLKKKSNNKKSKK.

The protein belongs to the CLU family. In terms of assembly, may associate with the eukaryotic translation initiation factor 3 (eIF-3) complex.

The protein resides in the cytoplasm. In terms of biological role, mRNA-binding protein involved in proper cytoplasmic distribution of mitochondria. The protein is Clustered mitochondria protein homolog of Debaryomyces hansenii (strain ATCC 36239 / CBS 767 / BCRC 21394 / JCM 1990 / NBRC 0083 / IGC 2968) (Yeast).